Reading from the N-terminus, the 280-residue chain is Apoptosis regulator ced-9 (280 aa).

A disordered region spans residues 33–59 (GTEPTDFGINSDAQDLPSPSRQASTRR). Residues 43–59 (SDAQDLPSPSRQASTRR) show a composition bias toward polar residues. Positions 80–99 (IEGFVVDYFTHRIRQNGMEW) match the BH4 motif. The BH1 motif lies at 160–179 (QTDQCPMSYGRLIGLISFGG). Positions 213–229 (NWKEHNRSWDDFMTLGK) match the BH2 motif.

The protein belongs to the Bcl-2 family. Interacts with asymmetric homodimer ced-4; the interaction sequesters ced-4. Interacts with egl-1; the interaction results in ced-4 release. Interacts with dre-1; the interaction inhibits ced-9 activity, either directly or indirectly. Interacts with dct-1. May form a complex composed of ced-9, ced-4 and mac-1. Interacts with dynamin-related protein drp-1 (via residues 280-502); the interaction is enhanced by GTP rather than GDP; the interaction is probably direct and may occur at the mitochondrion. Interaction with drp-1 may be enhanced by interaction of ced-9 with egl-1, but not with ced-4. A ced-9/egl-1 complex may recruit drp-1 to the mitochondrial surface. Interacts with fzo-1; interaction may be suppressed by interaction of ced-9 with egl-1.

It localises to the perikaryon. The protein localises to the synapse. Its subcellular location is the endomembrane system. The protein resides in the mitochondrion membrane. It is found in the cytoplasm. Plays a major role in programmed cell death (PCD, apoptosis). egl-1 binds to and directly inhibits the activity of ced-9, releasing the cell death activator ced-4 from a ced-9/ced-4 containing protein complex and allowing ced-4 to activate the cell-killing caspase ced-3. During larval development, required for the elimination of transient presynaptic components downstream of egl-1 and upstream of ced-4 and ced-3 apoptotic pathway. Has been shown in one study to be dispensable in mitochondrial dynamics and morphology during early embryonic development. However, another study shows that a egl-1/ced-9 containing complex may promote drp-1-dependent mitochondrial fission. The polypeptide is Apoptosis regulator ced-9 (ced-9) (Caenorhabditis elegans).